The sequence spans 137 residues: Large ribosomal subunit protein uL16 (137 aa).

The segment at 1–22 (MLQPKRTKFRKVQKGRNRGLAH) is disordered.

Belongs to the universal ribosomal protein uL16 family. As to quaternary structure, part of the 50S ribosomal subunit.

Its function is as follows. Binds 23S rRNA and is also seen to make contacts with the A and possibly P site tRNAs. In Chromohalobacter salexigens (strain ATCC BAA-138 / DSM 3043 / CIP 106854 / NCIMB 13768 / 1H11), this protein is Large ribosomal subunit protein uL16.